Here is a 419-residue protein sequence, read N- to C-terminus: UDP-N-acetylglucosamine 1-carboxyvinyltransferase (419 aa).

A phosphoenolpyruvate-binding site is contributed by 22 to 23; that stretch reads KN. R92 serves as a coordination point for UDP-N-acetyl-alpha-D-glucosamine. Residue C116 is the Proton donor of the active site. C116 is modified (2-(S-cysteinyl)pyruvic acid O-phosphothioketal). UDP-N-acetyl-alpha-D-glucosamine is bound by residues D307 and V329.

Belongs to the EPSP synthase family. MurA subfamily.

The protein localises to the cytoplasm. The enzyme catalyses phosphoenolpyruvate + UDP-N-acetyl-alpha-D-glucosamine = UDP-N-acetyl-3-O-(1-carboxyvinyl)-alpha-D-glucosamine + phosphate. Its pathway is cell wall biogenesis; peptidoglycan biosynthesis. Cell wall formation. Adds enolpyruvyl to UDP-N-acetylglucosamine. In Pseudothermotoga lettingae (strain ATCC BAA-301 / DSM 14385 / NBRC 107922 / TMO) (Thermotoga lettingae), this protein is UDP-N-acetylglucosamine 1-carboxyvinyltransferase.